The sequence spans 586 residues: MRTKYCGNIRISHVNKKVKLCGWVHKVRNLGQFIFVDMRDYTGLVQVIFELKNYTIFKKALNLRNEFCIQVFGTVQKREKKNQNIKIRTGEIEILANVLNILNTSKSLPLNFTQENNDDSRLKYRYLDLRSFDILENLKIRNKITYLIRNFMTKKNFLDIETPILTKSTPEGARDYLVPSRNHYGKFYALPQSPQLFKQILMISGIDRYYQIVKCFRDEDLRSDRQPEFTQIDIEVSFMSAKKIRNLVENLIKKLWLEIRNINLKKFPQISFHEAMKKYGSDKPDLRNPIEIIDVSNIFKDKKFISFFNLNPQKNNRIALLCISKGAHLSRKKIDDYTKYVQRFDAKKLFYIKIKECKLGCLGIHSSIKNILDEIILKEIIEKSQSKNGDILFLIADQEHIVNKSLGMLRLKIGIDLNITKKNRWEPLWIVNFPMFDKDIQGNLSSVHHPFTAVKNMDREILKNSPDLAISDSYDLIINGYEIGGGSVRIHDVNMQKQVFDIIGIKKSMQNEKFGFLIEALKYGAPPHAGIALGLDRIVMLLTNSKNIRDVIAFPKTTSATCLMTNSPSTVDNLLLQELAIKHLKK.

Glu-171 contacts L-aspartate. Residues 195 to 198 (QLFK) form an aspartate region. Residue Arg-217 participates in L-aspartate binding. ATP-binding positions include 217–219 (RDE) and Gln-226. His-448 serves as a coordination point for L-aspartate. Glu-482 is an ATP binding site. Position 489 (Arg-489) interacts with L-aspartate. 534–537 (GLDR) provides a ligand contact to ATP.

The protein belongs to the class-II aminoacyl-tRNA synthetase family. Type 1 subfamily. Homodimer.

It localises to the cytoplasm. The catalysed reaction is tRNA(Asp) + L-aspartate + ATP = L-aspartyl-tRNA(Asp) + AMP + diphosphate. In terms of biological role, catalyzes the attachment of L-aspartate to tRNA(Asp) in a two-step reaction: L-aspartate is first activated by ATP to form Asp-AMP and then transferred to the acceptor end of tRNA(Asp). In Buchnera aphidicola subsp. Acyrthosiphon pisum (strain 5A), this protein is Aspartate--tRNA ligase.